A 479-amino-acid chain; its full sequence is Glutamyl-tRNA(Gln) amidotransferase subunit A (479 aa).

Catalysis depends on charge relay system residues K71 and S146. Residue S170 is the Acyl-ester intermediate of the active site.

This sequence belongs to the amidase family. GatA subfamily. In terms of assembly, heterotrimer of A, B and C subunits.

It carries out the reaction L-glutamyl-tRNA(Gln) + L-glutamine + ATP + H2O = L-glutaminyl-tRNA(Gln) + L-glutamate + ADP + phosphate + H(+). Functionally, allows the formation of correctly charged Gln-tRNA(Gln) through the transamidation of misacylated Glu-tRNA(Gln) in organisms which lack glutaminyl-tRNA synthetase. The reaction takes place in the presence of glutamine and ATP through an activated gamma-phospho-Glu-tRNA(Gln). The protein is Glutamyl-tRNA(Gln) amidotransferase subunit A of Lactobacillus gasseri (strain ATCC 33323 / DSM 20243 / BCRC 14619 / CIP 102991 / JCM 1131 / KCTC 3163 / NCIMB 11718 / NCTC 13722 / AM63).